Reading from the N-terminus, the 339-residue chain is 7,8-didemethyl-8-hydroxy-5-deazariboflavin synthase (339 aa).

The Radical SAM core domain occupies 25-256; that stretch reads ATYSPAYTIV…PDITIQIPPN (232 aa). The [4Fe-4S] cluster site is built by Cys-39, Cys-43, and Cys-46.

Belongs to the radical SAM superfamily. CofG family. Consists of two subunits, CofG and CofH. It depends on [4Fe-4S] cluster as a cofactor.

It carries out the reaction 5-amino-5-(4-hydroxybenzyl)-6-(D-ribitylimino)-5,6-dihydrouracil + S-adenosyl-L-methionine = 7,8-didemethyl-8-hydroxy-5-deazariboflavin + 5'-deoxyadenosine + L-methionine + NH4(+) + H(+). The protein operates within cofactor biosynthesis; coenzyme F0 biosynthesis. In terms of biological role, catalyzes the radical-mediated synthesis of 7,8-didemethyl-8-hydroxy-5-deazariboflavin from 5-amino-5-(4-hydroxybenzyl)-6-(D-ribitylimino)-5,6-dihydrouracil. In Nostoc sp. (strain PCC 7120 / SAG 25.82 / UTEX 2576), this protein is 7,8-didemethyl-8-hydroxy-5-deazariboflavin synthase.